Reading from the N-terminus, the 448-residue chain is Hydroxycinnamoyl-CoA:piscidic acid hydroxycinnamoyltransferase (448 aa).

Residues H153 and D395 each act as proton acceptor in the active site.

The protein belongs to the plant acyltransferase family. As to expression, highly expressed in root and rhizome. Expressed in senescent leaf and callus tissues. Expressed in detached leaf treated for 18 hours with ethephon, methyl jasmonate, salicylic acid or illuminated for 24 hours with UV light. Not expressed in mature leaf. Expressed at low levels in leaves and flowers.

The catalysed reaction is (2R,3S)-piscidate + (E)-4-coumaroyl-CoA = cimicifugate K + CoA. The enzyme catalyses (2R,3S)-piscidate + (E)-caffeoyl-CoA = cimicifugate D + CoA. It catalyses the reaction (2R,3S)-piscidate + (E)-sinapoyl-CoA = cimicifugate J + CoA. It carries out the reaction (2R,3S)-piscidate + (E)-feruloyl-CoA = cimicifugate E + CoA. Its pathway is phenylpropanoid metabolism. Its function is as follows. Catalyzes the formation of cimicifugic acids. Uses hydroxycinnamoyl-CoA thioesters as hydroxycinnamoyl donor substrates. Has a strict specificity for piscidic acid as an acceptor substrate as none of the various other acceptors tested including 4-hydroxyphenyllactic acid, malate, spermidine or tetrahydroxyhexanedioic acid are substrates. Donor substrates include 4-coumaroyl-CoA, caffeoyl-CoA, sinapoyl-CoA and feruloyl-CoA. No activity with cinnamoyl-CoA, isoferuloyl-CoA, 3,4-dimethoxycinnamoyl-CoA or 3,4-dihydroxybenzoyl-CoA as donors. In the reverse reaction with fukinolic acid and CoA as substrates, a formation of fukiic acid is evident. Hence, fukiic acid may also serve as an acceptor substrate. Involved in the biosynthesis of cimicifugic and possibly fukinolic acids. The chain is Hydroxycinnamoyl-CoA:piscidic acid hydroxycinnamoyltransferase from Actaea racemosa (Black cohosh).